The following is a 222-amino-acid chain: Ornithine decarboxylase antizyme 1 (222 aa).

The protein belongs to the ODC antizyme family. In terms of assembly, interacts with ODC1 and thereby sterically blocks ODC homodimerization. Forms a ternary complex with PSMB4 and OAZ1 before PSMB4 is incorporated into the 20S proteasome. Interacts with AZIN2; this interaction disrupts the interaction between the antizyme and ODC1. Interacts with FAM171A1.

Functionally, ornithine decarboxylase (ODC) antizyme protein that negatively regulates ODC activity and intracellular polyamine biosynthesis and uptake in response to increased intracellular polyamine levels. Binds to ODC monomers, inhibiting the assembly of the functional ODC homodimer, and targets the monomers for ubiquitin-independent proteolytic destruction by the 26S proteasome. Triggers ODC degradation by inducing the exposure of a cryptic proteasome-interacting surface of ODC. Stabilizes AZIN2 by interfering with its ubiquitination. Also inhibits cellular uptake of polyamines by inactivating the polyamine uptake transporter. SMAD1/OAZ1/PSMB4 complex mediates the degradation of the CREBBP/EP300 repressor SNIP1. Involved in the translocation of AZIN2 from ER-Golgi intermediate compartment (ERGIC) to the cytosol. In Mesocricetus auratus (Golden hamster), this protein is Ornithine decarboxylase antizyme 1 (OAZ1).